Reading from the N-terminus, the 350-residue chain is Phospho-N-acetylmuramoyl-pentapeptide-transferase (350 aa).

Transmembrane regions (helical) follow at residues 28-48 (LPLL…IPLL), 70-90 (GTPT…GSLI), 100-120 (LLSL…DDWS), 136-156 (LLLQ…QGWI), 164-184 (FGLE…VVLA), 195-215 (LDGL…LQLM), 221-241 (GDPA…GFLV), 249-269 (AFMG…VALL), and 328-348 (QSVV…GLVL).

The protein belongs to the glycosyltransferase 4 family. MraY subfamily. The cofactor is Mg(2+).

It is found in the cell inner membrane. It carries out the reaction UDP-N-acetyl-alpha-D-muramoyl-L-alanyl-gamma-D-glutamyl-meso-2,6-diaminopimeloyl-D-alanyl-D-alanine + di-trans,octa-cis-undecaprenyl phosphate = di-trans,octa-cis-undecaprenyl diphospho-N-acetyl-alpha-D-muramoyl-L-alanyl-D-glutamyl-meso-2,6-diaminopimeloyl-D-alanyl-D-alanine + UMP. The protein operates within cell wall biogenesis; peptidoglycan biosynthesis. Catalyzes the initial step of the lipid cycle reactions in the biosynthesis of the cell wall peptidoglycan: transfers peptidoglycan precursor phospho-MurNAc-pentapeptide from UDP-MurNAc-pentapeptide onto the lipid carrier undecaprenyl phosphate, yielding undecaprenyl-pyrophosphoryl-MurNAc-pentapeptide, known as lipid I. This chain is Phospho-N-acetylmuramoyl-pentapeptide-transferase, found in Synechococcus sp. (strain CC9605).